The sequence spans 194 residues: Molybdenum cofactor guanylyltransferase (194 aa).

GTP-binding positions include 12–14, Lys-25, Asp-71, and Asp-101; that span reads LAG. Residue Asp-101 participates in Mg(2+) binding.

This sequence belongs to the MobA family. Monomer. Mg(2+) is required as a cofactor.

It localises to the cytoplasm. The catalysed reaction is Mo-molybdopterin + GTP + H(+) = Mo-molybdopterin guanine dinucleotide + diphosphate. Functionally, transfers a GMP moiety from GTP to Mo-molybdopterin (Mo-MPT) cofactor (Moco or molybdenum cofactor) to form Mo-molybdopterin guanine dinucleotide (Mo-MGD) cofactor. This chain is Molybdenum cofactor guanylyltransferase, found in Salmonella typhimurium (strain LT2 / SGSC1412 / ATCC 700720).